Consider the following 505-residue polypeptide: Cyclic AMP-dependent transcription factor ATF-2 (505 aa).

The Nuclear export signal 1 (N-NES) signature appears at Met-1–Val-7. The C2H2-type zinc finger occupies Phe-25–His-49. Residue Thr-52 is modified to Phosphothreonine; by PKC/PRKCH. Ser-62 is modified (phosphoserine; by VRK1). Thr-69 carries the phosphothreonine; by MAPK11 and MAPK14 modification. Residue Thr-71 is modified to Phosphothreonine; by MAPK1, MAPK3, MAPK11, MAPK12, MAPK14 and PLK3. Phosphothreonine; by VRK1 is present on Thr-73. Residues Ser-90 and Ser-112 each carry the phosphoserine modification. Thr-116 carries the post-translational modification Phosphothreonine. A Phosphoserine; by PKC/PRKCA and PKC/PRKCB modification is found at Ser-121. 2 disordered regions span residues Glu-125–Gln-155 and Pro-259–Arg-373. Ser-136 is modified (phosphoserine). Over residues Leu-282–Asp-293 the composition is skewed to polar residues. Positions Lys-296 to Gly-299 are essential for its histone acetyltransferase activity. The span at Pro-318–Pro-334 shows a compositional bias: low complexity. Ser-328 is subject to Phosphoserine. A Phosphoserine; by PKC/PRKCA and PKC/PRKCB modification is found at Ser-340. The segment covering Ala-346 to Arg-363 has biased composition (basic and acidic residues). The 64-residue stretch at Asp-352–His-415 folds into the bZIP domain. Residues Lys-354–Lys-374 form a basic motif region. An N6-acetyllysine modification is found at Lys-357. Ser-367 carries the phosphoserine; by PKC/PRKCA and PKC/PRKCB modification. Position 374 is an N6-acetyllysine (Lys-374). Positions Leu-380–Leu-408 are leucine-zipper. Residues Val-405–Ala-414 carry the Nuclear export signal 2 (C-NES) motif. The disordered stretch occupies residues Lys-425 to Val-472. Ser-442 and Ser-446 each carry phosphoserine. The span at Val-443–His-454 shows a compositional bias: polar residues. The span at Ser-455–Ser-467 shows a compositional bias: low complexity. A phosphoserine; by ATM mark is found at Ser-490 and Ser-498.

Belongs to the bZIP family. ATF subfamily. Binds DNA as a dimer and can form a homodimer in the absence of DNA. Can form a heterodimer with JUN. Heterodimerization is essential for its transcriptional activity. Interacts with SMAD3 and SMAD4. Binds through its N-terminal region to UTF1 which acts as a coactivator of ATF2 transcriptional activity. Interacts with the HK1/VDAC1 complex. Interacts with NBN, MRE11, XPO1, KAT5 and CUL3. In terms of processing, phosphorylation of Thr-69 by MAPK14 and MAPK11, and at Thr-71 by MAPK1/ERK2, MAPK3/ERK1, MAPK11, MAPK12 and MAPK14 in response to external stimulus like insulin causes increased transcriptional activity. Phosphorylated by PLK3 following hyperosmotic stress. Also phosphorylated and activated by JNK and CaMK4. ATM-mediated phosphorylation at Ser-490 and Ser-498 stimulates its function in DNA damage response. Phosphorylation at Ser-62, Thr-73 and Ser-121 activates its transcriptional activity. Phosphorylation at Thr-69 or Thr-71 enhances acetylation of histones H2B and H4. In terms of tissue distribution, ubiquitously expressed, with more abundant expression in the brain.

The protein localises to the nucleus. The protein resides in the cytoplasm. It is found in the mitochondrion outer membrane. Its function is as follows. Transcriptional activator which regulates the transcription of various genes, including those involved in anti-apoptosis, cell growth, and DNA damage response. Dependent on its binding partner, binds to CRE (cAMP response element) consensus sequences (5'-TGACGTCA-3') or to AP-1 (activator protein 1) consensus sequences (5'-TGACTCA-3'). In the nucleus, contributes to global transcription and the DNA damage response, in addition to specific transcriptional activities that are related to cell development, proliferation and death. In the cytoplasm, interacts with and perturbs HK1- and VDAC1-containing complexes at the mitochondrial outer membrane, thereby impairing mitochondrial membrane potential, inducing mitochondrial leakage and promoting cell death. The phosphorylated form (mediated by ATM) plays a role in the DNA damage response and is involved in the ionizing radiation (IR)-induced S phase checkpoint control and in the recruitment of the MRN complex into the IR-induced foci (IRIF). Exhibits histone acetyltransferase (HAT) activity which specifically acetylates histones H2B and H4 in vitro. In concert with CUL3 and RBX1, promotes the degradation of KAT5 thereby attenuating its ability to acetylate and activate ATM. Can elicit oncogenic or tumor suppressor activities depending on the tissue or cell type. This is Cyclic AMP-dependent transcription factor ATF-2 (ATF2) from Homo sapiens (Human).